Consider the following 333-residue polypeptide: 5-formaminoimidazole-4-carboxamide-1-(beta)-D-ribofuranosyl 5'-monophosphate synthetase (333 aa).

Positions 20 and 85 each coordinate 5-amino-1-(5-phospho-beta-D-ribosyl)imidazole-4-carboxamide. Residues R106–E313 enclose the ATP-grasp domain. Residues P136–Y187 and E209 each bind ATP. 5-amino-1-(5-phospho-beta-D-ribosyl)imidazole-4-carboxamide is bound at residue N229. Mg(2+)-binding residues include E268 and E281.

This sequence belongs to the phosphohexose mutase family. Requires Mg(2+) as cofactor. Mn(2+) is required as a cofactor.

It carries out the reaction 5-amino-1-(5-phospho-beta-D-ribosyl)imidazole-4-carboxamide + formate + ATP = 5-formamido-1-(5-phospho-D-ribosyl)imidazole-4-carboxamide + ADP + phosphate. It functions in the pathway purine metabolism; IMP biosynthesis via de novo pathway; 5-formamido-1-(5-phospho-D-ribosyl)imidazole-4-carboxamide from 5-amino-1-(5-phospho-D-ribosyl)imidazole-4-carboxamide (formate route): step 1/1. Catalyzes the ATP- and formate-dependent formylation of 5-aminoimidazole-4-carboxamide-1-beta-d-ribofuranosyl 5'-monophosphate (AICAR) to 5-formaminoimidazole-4-carboxamide-1-beta-d-ribofuranosyl 5'-monophosphate (FAICAR) in the absence of folates. This is 5-formaminoimidazole-4-carboxamide-1-(beta)-D-ribofuranosyl 5'-monophosphate synthetase from Pyrobaculum islandicum (strain DSM 4184 / JCM 9189 / GEO3).